The chain runs to 105 residues: Integration host factor subunit alpha (105 aa).

The protein belongs to the bacterial histone-like protein family. In terms of assembly, heterodimer of an alpha and a beta chain.

This protein is one of the two subunits of integration host factor, a specific DNA-binding protein that functions in genetic recombination as well as in transcriptional and translational control. This chain is Integration host factor subunit alpha, found in Azorhizobium caulinodans (strain ATCC 43989 / DSM 5975 / JCM 20966 / LMG 6465 / NBRC 14845 / NCIMB 13405 / ORS 571).